The following is a 704-amino-acid chain: MALEALTDLKKVRNIGIMAHIDAGKTTTTERILFYTGINRKVGETHDGASTMDWMEQEKERGITITSAATTCFWKDNQINIIDTPGHVDFTIEVERSLRVLDGAVAVFDAKEGVEPQSEQVWRQATKYDVPRICFVNKMDKLGADFYYTVQTIVDRLGAKPLVMALPIGAEDDFDGIVDLLNMRAVTWRGKVEIGAEATYEEIPEDLKDKAEEYREKLVETVAESDEELMERYFAGEEITVDELKAQIRKLTISSEVYPVYCGSAYKNKGIQPMLDAVIDFLPNPMDVGSIKGHDAKDPEVEVLRKPSKDEPFSALAFKVAVHPFFGKLTYVRVYSGSVETGGQVMNSTKEKKERIGKLFQMHSNKEQPVDRASAGHIYAFIGLKDTTTGDTLCDAQDPVILESMDFPDPVIEVAIEPKTKSDQEKLGTAIQKLAEEDPTFTVKLDEETGQTVLGGMGELHLDVMVDRMKREFKVEANIGNPQVAYRETIRKPVEKLEYTHKKQTGGSGQFARVIIALEPYEPEEGSDQTYEFVNEVTGGRVPKEYIPSVDAGIQDAMQYGYLAGFPLVNIKATLLDGAYHEVDSSEMAFKLAGSQALKEAVAKAKPVLLEPLMAVEVITPEEYMGDVIGDINSRRGQVSSMDDRAGAKVVKAKVPLSEMFGYIGDLRSRTAGRANFSMIFDSYGEVPTNVASDIIAERTGGNA.

The region spanning 10 to 286 is the tr-type G domain; the sequence is KKVRNIGIMA…AVIDFLPNPM (277 aa). GTP is bound by residues 19 to 26, 83 to 87, and 137 to 140; these read AHIDAGKT, DTPGH, and NKMD.

It belongs to the TRAFAC class translation factor GTPase superfamily. Classic translation factor GTPase family. EF-G/EF-2 subfamily.

It is found in the cytoplasm. In terms of biological role, catalyzes the GTP-dependent ribosomal translocation step during translation elongation. During this step, the ribosome changes from the pre-translocational (PRE) to the post-translocational (POST) state as the newly formed A-site-bound peptidyl-tRNA and P-site-bound deacylated tRNA move to the P and E sites, respectively. Catalyzes the coordinated movement of the two tRNA molecules, the mRNA and conformational changes in the ribosome. The chain is Elongation factor G from Corynebacterium jeikeium (strain K411).